We begin with the raw amino-acid sequence, 88 residues long: UPF0237 protein spr0217 (88 aa).

The 74-residue stretch at 4 to 77 (IITVVGKDKS…QTLNVKINIQ (74 aa)) folds into the ACT domain.

It belongs to the UPF0237 family. As to quaternary structure, homodimer.

In Streptococcus pneumoniae (strain ATCC BAA-255 / R6), this protein is UPF0237 protein spr0217.